A 248-amino-acid polypeptide reads, in one-letter code: Coproheme decarboxylase (248 aa).

Fe-coproporphyrin III is bound by residues R130, Y144–K148, H171, Q184, and S222. Residue Y144 is part of the active site.

This sequence belongs to the ChdC family. Type 1 subfamily. Fe-coproporphyrin III is required as a cofactor.

The enzyme catalyses Fe-coproporphyrin III + 2 H2O2 + 2 H(+) = heme b + 2 CO2 + 4 H2O. The catalysed reaction is Fe-coproporphyrin III + H2O2 + H(+) = harderoheme III + CO2 + 2 H2O. It catalyses the reaction harderoheme III + H2O2 + H(+) = heme b + CO2 + 2 H2O. It participates in porphyrin-containing compound metabolism; protoheme biosynthesis. Functionally, involved in coproporphyrin-dependent heme b biosynthesis. Catalyzes the decarboxylation of Fe-coproporphyrin III (coproheme) to heme b (protoheme IX), the last step of the pathway. The reaction occurs in a stepwise manner with a three-propionate intermediate. This Geobacillus sp. (strain WCH70) protein is Coproheme decarboxylase.